A 485-amino-acid polypeptide reads, in one-letter code: ATP synthase subunit beta (485 aa).

Gly158 to Thr165 contributes to the ATP binding site.

The protein belongs to the ATPase alpha/beta chains family. F-type ATPases have 2 components, CF(1) - the catalytic core - and CF(0) - the membrane proton channel. CF(1) has five subunits: alpha(3), beta(3), gamma(1), delta(1), epsilon(1). CF(0) has four main subunits: a(1), b(1), b'(1) and c(9-12).

The protein resides in the cell inner membrane. It catalyses the reaction ATP + H2O + 4 H(+)(in) = ADP + phosphate + 5 H(+)(out). Its function is as follows. Produces ATP from ADP in the presence of a proton gradient across the membrane. The catalytic sites are hosted primarily by the beta subunits. In Erythrobacter litoralis (strain HTCC2594), this protein is ATP synthase subunit beta.